Reading from the N-terminus, the 415-residue chain is uncharacterized protein (415 aa).

[4Fe-4S] cluster-binding residues include Cys-66, Cys-72, Cys-75, and Cys-149. S-adenosyl-L-methionine contacts are provided by Gln-249, Phe-276, Glu-296, and Asp-344. The active-site Nucleophile is the Cys-370.

This sequence belongs to the class I-like SAM-binding methyltransferase superfamily. RNA M5U methyltransferase family.

This is an uncharacterized protein from Brucella melitensis biotype 1 (strain ATCC 23456 / CCUG 17765 / NCTC 10094 / 16M).